The following is a 233-amino-acid chain: Probable GTP-binding protein EngB (233 aa).

The 208-residue stretch at 21 to 228 folds into the EngB-type G domain; the sequence is GLPEVALVGR…WRWIREHVQD (208 aa). GTP is bound by residues 29-36 and 56-60; these read GRSNVGKS and GRTQA. Mg(2+) contacts are provided by Ser-36 and Thr-58. The disordered stretch occupies residues 68–87; that stretch reads PQGKPRPEGEPQPDKDAGRT. Basic and acidic residues predominate over residues 72 to 85; sequence PRPEGEPQPDKDAG. Residues 107 to 110, 174 to 177, and 207 to 209 each bind GTP; these read DMPG, TKAD, and FSA.

This sequence belongs to the TRAFAC class TrmE-Era-EngA-EngB-Septin-like GTPase superfamily. EngB GTPase family. Requires Mg(2+) as cofactor.

Functionally, necessary for normal cell division and for the maintenance of normal septation. The sequence is that of Probable GTP-binding protein EngB from Symbiobacterium thermophilum (strain DSM 24528 / JCM 14929 / IAM 14863 / T).